The primary structure comprises 582 residues: uncharacterized protein (582 aa).

12 consecutive transmembrane segments (helical) span residues 29–49 (LFIVLLRFIIPSILVSFFAAL), 117–137 (ISAPITVIINALTLLITMGLA), 155–175 (VWATGFITNVIVSIATSMIIV), 225–245 (YVYILAGLFTIQTFNQMYFLL), 254–274 (FISIIPPLANLINILFDYLLI), 287–307 (ATVIGWSLSCLAYVIYNIVLI), 329–349 (YLYLIILIGLASFFRNAALSV), 376–396 (SIFGSVTPISNLMLQSVWGLI), 432–452 (IVYLLFGFGLNNIFLINLFNI), 458–478 (LVVSNLVLRITLVQSIFIALS), 491–511 (IGMAWIASLMQGLFTFAPVFF), and 523–543 (IYLYIWIQPINAILTCIGNWI).

The protein resides in the cell membrane. This is an uncharacterized protein from Mycoplasmoides gallisepticum (strain R(low / passage 15 / clone 2)) (Mycoplasma gallisepticum).